We begin with the raw amino-acid sequence, 978 residues long: MAADSDPESEVFEITDFTTASEWERFISKVEEVLTEWKLIGETSNKPPEKGEYTSGVWEEKGEEVLFADFRFSIRHHYLVQKSSEKEEKEDTGEDSIPVCMQDLLCTNNDFPPVAHCLVRWYGLREFVVISPGANDAVISESKCNLLLSSVSIALGNTGCQVPLFVQVHQKWRKLYVGECRGPGVRTDFEMVHLRKVPNQYTHLSGLLDIFKSKIGCPLTALPPVNIAIRFTYVLQDWQQYFWPQQPPDIDALIGGEVGGLEFGKLPFGACEDPISELHLATTWPCLTEGIIVDNDVYSDLDPLQAPQWSVRVRKADNPQCMLGDFVSEFFRLCRRKESTDELLGKSAFEENGKEGADISQALSKLTEPAPVPIHKLSVTSMVHSARKKIRKHRGADESPLNNDVLNAILFFLFPDTKSLDGSEAKPSTSTGNISSQSESEDYNLYSQLKSAPSNSLTYKLALCLCMVNFYHGGVKGVAHLWQEFVLEMRYRWENNFLIPGLANGSPDLKCCLLHQKLQMLNCCLERKKARDEGKKGNPLYSSSESSVNKTASDLLSPVEADKSKYEVAKSWDSWSDSEEEFFECHSDTEELKESGQESARKAKEETKENPSPKPEGRLHQSGNLMLLNSGEPLYIPVTQDPAPMTDDLLEEQSEVLAKLGTSAEGAHLRARMQSACLLSDMESFKAANPGCCLEDFVRWYSPRDYIEEEVMDDKGNKIFKGELSARMKIPNNMWVEAWETAKPIPARRQRRLFDDTKEAEKVLHYLAVQKPADLTRHLLPCVIHAALLKLKEEEAAEDIPSGRKAIKQIISHSSKVLRFPSPDDKKLEDVISQISNVEAAIARARSLKAKFAIDRCEKSEEREDLEKFVSCLLDQPEVPIIGAGRGAAGTIIHKMFVQRALTLAPVEEEPKRSSSSDDRRQTSGTDFPSPAGRELILRTSVPRPAPYSKVLPQRMYSVLTKEDFRLTGAFSSDTSFF.

Disordered regions lie at residues 533–554, 586–621, and 908–936; these read EGKK…TASD, HSDT…RLHQ, and EEEP…GREL. Residues 540 to 554 are compositionally biased toward polar residues; the sequence is LYSSSESSVNKTASD. Composition is skewed to basic and acidic residues over residues 586-619 and 909-922; these read HSDT…EGRL and EEPK…DRRQ.

This sequence belongs to the Rab3-GAP catalytic subunit family. As to quaternary structure, the Rab3 GTPase-activating complex is a heterodimer composed of rab3gap1 and rab3gap2. The Rab3 GTPase-activating complex interacts with DMXL2. Interacts with LMAN1.

Its subcellular location is the cytoplasm. The protein resides in the endoplasmic reticulum. It localises to the golgi apparatus. The protein localises to the cis-Golgi network. Catalytic subunit of the Rab3 GTPase-activating (Rab3GAP) complex composed of rab3gap1 and rab3gap2, which has GTPase-activating protein (GAP) activity towards various Rab3 subfamily members (RAB3A, RAB3B, RAB3C and RAB3D), RAB5A and RAB43, and guanine nucleotide exchange factor (GEF) activity towards RAB18. As part of the Rab3GAP complex, acts as a GAP for Rab3 proteins by converting active RAB3-GTP to the inactive form RAB3-GDP. Rab3 proteins are involved in regulated exocytosis of neurotransmitters and hormones. The Rab3GAP complex, acts as a GEF for RAB18 by promoting the conversion of inactive RAB18-GDP to the active form RAB18-GTP. Recruits and stabilizes RAB18 at the cis-Golgi membrane where RAB18 is most likely activated. Also involved in RAB18 recruitment at the endoplasmic reticulum (ER) membrane where it maintains proper ER structure. Required for normal eye and brain development. May participate in neurodevelopmental processes such as proliferation, migration and differentiation before synapse formation, and non-synaptic vesicular release of neurotransmitters. This Xenopus laevis (African clawed frog) protein is Rab3 GTPase-activating protein catalytic subunit (rab3gap1).